A 270-amino-acid polypeptide reads, in one-letter code: Cyclic pyranopterin monophosphate synthase, mitochondrial (270 aa).

The N-terminal 32 residues, 1 to 32 (MISTLRRAVFLRRFPAVVSPIKRAFSSRIDDE), are a transit peptide targeting the mitochondrion. Residues 187–189 (LCH) and 225–226 (ME) each bind substrate. Residue aspartate 240 is part of the active site.

This sequence belongs to the MoaC family. As to quaternary structure, homohexamer. In terms of tissue distribution, abundantly expressed in the roots.

It is found in the mitochondrion matrix. It carries out the reaction (8S)-3',8-cyclo-7,8-dihydroguanosine 5'-triphosphate = cyclic pyranopterin phosphate + diphosphate. It participates in cofactor biosynthesis; molybdopterin biosynthesis. Functionally, catalyzes the conversion of (8S)-3',8-cyclo-7,8-dihydroguanosine 5'-triphosphate to cyclic pyranopterin monophosphate (cPMP). This chain is Cyclic pyranopterin monophosphate synthase, mitochondrial (CNX3), found in Arabidopsis thaliana (Mouse-ear cress).